Reading from the N-terminus, the 111-residue chain is Disintegrin DS-AN (111 aa).

The first 20 residues, 1 to 20 (MIQVLLVIICLAVFPYQGSC), serve as a signal peptide directing secretion. A propeptide spanning residues 21–47 (IILESGNVNDYEIVYPKKLIVLPTGAM) is cleaved from the precursor. Residues 47-111 (MNSPHPCCDP…PDCPRNPYKD (65 aa)) form the Disintegrin domain. Cystine bridges form between C53/C76, C67/C73, C72/C97, and C85/C104. A Cell attachment site motif is present at residues 89 to 91 (RGD).

Heterodimer; disulfide-linked.

It localises to the secreted. Functionally, inhibits ADP-induced platelet aggregation in human platelet-rich plasma (IC(50) is 8 uM). This Atheris nitschei (Great lakes bush viper) protein is Disintegrin DS-AN.